A 195-amino-acid polypeptide reads, in one-letter code: Proteasome subunit beta 1 (195 aa).

Positions 1–6 are cleaved as a propeptide — removed in mature form; by autocatalysis; sequence MEELPA. T7 functions as the Nucleophile in the catalytic mechanism.

This sequence belongs to the peptidase T1B family. The 20S proteasome core is composed of 14 alpha and 14 beta subunits that assemble into four stacked heptameric rings, resulting in a barrel-shaped structure. The two inner rings, each composed of seven catalytic beta subunits, are sandwiched by two outer rings, each composed of seven alpha subunits. The catalytic chamber with the active sites is on the inside of the barrel. Has a gated structure, the ends of the cylinder being occluded by the N-termini of the alpha-subunits. Is capped at one or both ends by the proteasome regulatory ATPase, PAN.

Its subcellular location is the cytoplasm. The catalysed reaction is Cleavage of peptide bonds with very broad specificity.. With respect to regulation, the formation of the proteasomal ATPase PAN-20S proteasome complex, via the docking of the C-termini of PAN into the intersubunit pockets in the alpha-rings, triggers opening of the gate for substrate entry. Interconversion between the open-gate and close-gate conformations leads to a dynamic regulation of the 20S proteasome proteolysis activity. Functionally, component of the proteasome core, a large protease complex with broad specificity involved in protein degradation. The sequence is that of Proteasome subunit beta 1 from Sulfolobus acidocaldarius (strain ATCC 33909 / DSM 639 / JCM 8929 / NBRC 15157 / NCIMB 11770).